Here is a 105-residue protein sequence, read N- to C-terminus: MMLKPSIDTLLDKVPSKYSLVILQAKRAHELESGATPTQAFTSVKPTLQALEEIEAGNVVIHPDPEAKRAAVRARAEAERIAKEEEERKIKEQIAKEKEEEGEKI.

Belongs to the RNA polymerase subunit omega family. As to quaternary structure, the RNAP catalytic core consists of 2 alpha, 1 beta, 1 beta' and 1 omega subunit. When a sigma factor is associated with the core the holoenzyme is formed, which can initiate transcription.

It catalyses the reaction RNA(n) + a ribonucleoside 5'-triphosphate = RNA(n+1) + diphosphate. In terms of biological role, promotes RNA polymerase assembly. Latches the N- and C-terminal regions of the beta' subunit thereby facilitating its interaction with the beta and alpha subunits. The polypeptide is DNA-directed RNA polymerase subunit omega (Streptococcus mutans serotype c (strain ATCC 700610 / UA159)).